Here is a 109-residue protein sequence, read N- to C-terminus: Small ribosomal subunit protein bS6c (109 aa).

This sequence belongs to the bacterial ribosomal protein bS6 family.

It is found in the plastid. The protein resides in the chloroplast. Functionally, binds together with bS18 to 16S ribosomal RNA. The chain is Small ribosomal subunit protein bS6c from Pyropia yezoensis (Susabi-nori).